Reading from the N-terminus, the 220-residue chain is Octanoyltransferase (220 aa).

The BPL/LPL catalytic domain maps to 27–208; it reads PGTADEIWLC…QLARAHGQAV (182 aa). Residues 66–73, 139–141, and 152–154 contribute to the substrate site; these read RGGQVTYH, ALG, and GLA. The active-site Acyl-thioester intermediate is C170.

This sequence belongs to the LipB family.

The protein resides in the cytoplasm. The enzyme catalyses octanoyl-[ACP] + L-lysyl-[protein] = N(6)-octanoyl-L-lysyl-[protein] + holo-[ACP] + H(+). It participates in protein modification; protein lipoylation via endogenous pathway; protein N(6)-(lipoyl)lysine from octanoyl-[acyl-carrier-protein]: step 1/2. Its function is as follows. Catalyzes the transfer of endogenously produced octanoic acid from octanoyl-acyl-carrier-protein onto the lipoyl domains of lipoate-dependent enzymes. Lipoyl-ACP can also act as a substrate although octanoyl-ACP is likely to be the physiological substrate. This chain is Octanoyltransferase, found in Bordetella pertussis (strain Tohama I / ATCC BAA-589 / NCTC 13251).